We begin with the raw amino-acid sequence, 701 residues long: Heterodisulfide reductase subunit A-like protein (701 aa).

152-175 (GGGIAGIFAALDIANAGYKVYLVE) serves as a coordination point for FAD. The region spanning 239–268 (KQTWVDWDLCTGCGACTDVCPPKARVPDEF) is the 4Fe-4S ferredoxin-type 1 domain. [4Fe-4S] cluster-binding residues include cysteine 248, cysteine 251, cysteine 254, cysteine 326, cysteine 627, cysteine 630, cysteine 633, cysteine 637, cysteine 660, cysteine 663, cysteine 666, and cysteine 670. 4Fe-4S ferredoxin-type domains follow at residues 618–647 (LVSE…MTKY) and 651–680 (MRAE…LHGF).

It belongs to the HdrA family. In terms of assembly, the heterodisulfide reductase is composed of three subunits; HdlA, HdlB and HdlC. It forms a complex with the F420-non-reducing hydrogenase (Mvh), which provides the reducing equivalents to the heterodisulfide reductase. The cofactor is [4Fe-4S] cluster. FAD is required as a cofactor.

It localises to the cytoplasm. Has oxidoreductase activity. The Hdl and Mvh subunits may together mediate electron transfer from hydrogen to an unidentified electron acceptor on the cytoplasmic side of the membrane. In Archaeoglobus profundus (strain DSM 5631 / JCM 9629 / NBRC 100127 / Av18), this protein is Heterodisulfide reductase subunit A-like protein (hdlA).